Reading from the N-terminus, the 455-residue chain is Argininosuccinate synthase (455 aa).

ATP contacts are provided by residues 17–25 and A43; that span reads AFSGGLDTS. Y99 is an L-citrulline binding site. ATP contacts are provided by G129 and T131. 3 residues coordinate L-aspartate: T131, N135, and D136. Residue N135 coordinates L-citrulline. Residue D136 participates in ATP binding. The L-citrulline site is built by R139 and S192. Position 194 (D194) interacts with ATP. L-citrulline-binding residues include T201, E203, and E280. Polar residues predominate over residues 434–448; it reads TGLPQVDNNNLSSGR. The segment at 434–455 is disordered; it reads TGLPQVDNNNLSSGRGLQDKRQ.

It belongs to the argininosuccinate synthase family. Type 2 subfamily. Homotetramer.

It localises to the cytoplasm. It carries out the reaction L-citrulline + L-aspartate + ATP = 2-(N(omega)-L-arginino)succinate + AMP + diphosphate + H(+). The protein operates within amino-acid biosynthesis; L-arginine biosynthesis; L-arginine from L-ornithine and carbamoyl phosphate: step 2/3. The protein is Argininosuccinate synthase (argG) of Yersinia pestis.